The sequence spans 78 residues: uncharacterized protein (78 aa).

2 consecutive transmembrane segments (helical) span residues 7 to 27 and 41 to 61; these read ICLV…FFQF and LSRI…GLLF.

The protein localises to the cell membrane. This is an uncharacterized protein from Bacillus subtilis (strain 168).